The sequence spans 296 residues: Thymidylate synthase (296 aa).

Residues Arg23 and 157–158 contribute to the dUMP site; that span reads RR. Cys177 acts as the Nucleophile in catalysis. DUMP contacts are provided by residues 198–201, Asn209, and 239–241; these read RSAD and HIY. (6R)-5,10-methylene-5,6,7,8-tetrahydrofolate is bound at residue Asp201. Ala295 is a (6R)-5,10-methylene-5,6,7,8-tetrahydrofolate binding site.

Belongs to the thymidylate synthase family. Bacterial-type ThyA subfamily. Homodimer.

The protein localises to the cytoplasm. It carries out the reaction dUMP + (6R)-5,10-methylene-5,6,7,8-tetrahydrofolate = 7,8-dihydrofolate + dTMP. The protein operates within pyrimidine metabolism; dTTP biosynthesis. Its function is as follows. Catalyzes the reductive methylation of 2'-deoxyuridine-5'-monophosphate (dUMP) to 2'-deoxythymidine-5'-monophosphate (dTMP) while utilizing 5,10-methylenetetrahydrofolate (mTHF) as the methyl donor and reductant in the reaction, yielding dihydrofolate (DHF) as a by-product. This enzymatic reaction provides an intracellular de novo source of dTMP, an essential precursor for DNA biosynthesis. The chain is Thymidylate synthase from Zymomonas mobilis subsp. mobilis (strain ATCC 31821 / ZM4 / CP4).